Reading from the N-terminus, the 513-residue chain is Protein phosphatase 1H (513 aa).

A Phosphoserine modification is found at Ser7. A PPM-type phosphatase domain is found at 77-506; sequence ATGYAEVINA…DDISVYVIPL (430 aa). The interval 109–133 is disordered; the sequence is TITSTPNRNSKRRSSLPNGEGLQLK. Thr113 carries the phosphothreonine modification. Phosphoserine is present on residues Ser123 and Ser210. At Arg212 the chain carries Omega-N-methylarginine. Phosphoserine is present on Ser220. Phosphothreonine is present on Thr223. Ser421 is modified (phosphoserine).

It belongs to the PP2C family.

The protein resides in the nucleus. The protein localises to the cytoplasm. It carries out the reaction O-phospho-L-seryl-[protein] + H2O = L-seryl-[protein] + phosphate. The enzyme catalyses O-phospho-L-threonyl-[protein] + H2O = L-threonyl-[protein] + phosphate. Functionally, dephosphorylates CDKN1B at 'Thr-187', thus removing a signal for proteasomal degradation. This is Protein phosphatase 1H (Ppm1h) from Mus musculus (Mouse).